The sequence spans 290 residues: MDKIIKSIAQSGAFRAYVLDSTETVALAQEKHNTLSSSTVALGRTLIANQILAANQKGDSKITVKVIGDSSFGHIISVADTKGHVKGYIQNTGVDIKKTATGEVLVGPFMGNGHFVTIIDYGTGNPYTSTTPLITGEIGEDFAYYLTESEQTPSAIGLNVLLDENDKVKVAGGFMVQVLPGASEEEIARYEKRLQEMPAISHLLASKNHVEALLEAIYGDEPYKRLSEEPLSFQCDCSRERFEAALMTLPKADLQAMIDEDKGAEIVCQFCGTKYQFNESDLEALINDKA.

Disulfide bonds link Cys-235–Cys-237 and Cys-268–Cys-271.

It belongs to the HSP33 family. Under oxidizing conditions two disulfide bonds are formed involving the reactive cysteines. Under reducing conditions zinc is bound to the reactive cysteines and the protein is inactive.

The protein resides in the cytoplasm. Redox regulated molecular chaperone. Protects both thermally unfolding and oxidatively damaged proteins from irreversible aggregation. Plays an important role in the bacterial defense system toward oxidative stress. This is 33 kDa chaperonin from Streptococcus pyogenes serotype M3 (strain ATCC BAA-595 / MGAS315).